A 536-amino-acid polypeptide reads, in one-letter code: Zinc finger protein 623 (536 aa).

The segment at 57–77 (GELLGNPEGQSLGSSPSQDRG) is disordered. Polar residues predominate over residues 64–74 (EGQSLGSSPSQ). 13 consecutive C2H2-type zinc fingers follow at residues 123-145 (NPCD…RISH), 151-173 (YTCD…QRIH), 179-201 (YVCN…QRVH), 207-229 (FKCA…QRVH), 235-257 (FECK…QRIH), 263-285 (YECN…YQIH), 291-313 (YECK…QRIH), 319-341 (FECN…QRIH), 347-369 (YVCN…QRIH), 375-397 (YECN…QKIH), 403-425 (YECK…QKIH), 431-453 (FECK…QIIH), and 459-481 (YVCS…QKIH). Residue Lys-445 forms a Glycyl lysine isopeptide (Lys-Gly) (interchain with G-Cter in SUMO2) linkage. Residues 513–536 (LSLSKAPIHLGERSVDKGEHTGNL) are disordered. The span at 522–536 (LGERSVDKGEHTGNL) shows a compositional bias: basic and acidic residues.

Belongs to the krueppel C2H2-type zinc-finger protein family.

Its subcellular location is the nucleus. Functionally, may be involved in transcriptional regulation. The polypeptide is Zinc finger protein 623 (ZNF623) (Homo sapiens (Human)).